Here is a 359-residue protein sequence, read N- to C-terminus: Serpentine receptor class epsilon-26 (359 aa).

The next 7 helical transmembrane spans lie at 29-49 (CAISSAELPFYMLSAYVVFVS), 66-86 (IGVPMFGSWFLLIAGKLITIL), 127-147 (VAGFLEIHFGFSVIFVGLAIV), 172-192 (FIIIYQFLAISISLGILFNIL), 195-215 (YVLNASWILCILIGTIMYYYI), 256-276 (LVFVVLATIVVMGFGIVALVL), and 282-302 (FFMHFGENTLFCYPLYIFLVV).

The protein belongs to the nematode receptor-like protein sre family.

The protein resides in the membrane. This chain is Serpentine receptor class epsilon-26 (sre-26), found in Caenorhabditis elegans.